The following is a 78-amino-acid chain: RNA-binding protein Hfq (78 aa).

The Sm domain maps to 10 to 69 (DPFLNTLRKEHVPVSIYLVNGIKLQGQIESFDQYVVLLRNTVTQMVYKHAISTVVPARAV).

It belongs to the Hfq family. In terms of assembly, homohexamer.

Functionally, RNA chaperone that binds small regulatory RNA (sRNAs) and mRNAs to facilitate mRNA translational regulation in response to envelope stress, environmental stress and changes in metabolite concentrations. Also binds with high specificity to tRNAs. In Bordetella petrii (strain ATCC BAA-461 / DSM 12804 / CCUG 43448), this protein is RNA-binding protein Hfq.